Here is a 193-residue protein sequence, read N- to C-terminus: Ancillary SecYEG translocon subunit (193 aa).

Residues 1–11 (MIKNSYINEKL) lie on the Cytoplasmic side of the membrane. The chain crosses the membrane as a helical span at residues 12 to 34 (NFYQKSFLTCMLLIVIVIVYFFS). Topologically, residues 35–193 (KNYLDKPKNS…IIQMKINNYN (159 aa)) are extracellular.

The protein belongs to the YfgM family. In terms of assembly, interacts with the Sec translocon. Forms a complex with PpiD.

The protein localises to the cell membrane. Functionally, may mediate protein transfer from the Sec translocon to the chaperone network via its extracellular C-terminal region. The polypeptide is Ancillary SecYEG translocon subunit (Buchnera aphidicola subsp. Baizongia pistaciae (strain Bp)).